The chain runs to 82 residues: ATP synthase subunit c, chloroplastic (82 aa).

Residue Met-1 is modified to N-formylmethionine. 2 helical membrane-spanning segments follow: residues 3–23 and 57–77; these read PIVA…AAIG and FAFM…LLFA.

Belongs to the ATPase C chain family. F-type ATPases have 2 components, F(1) - the catalytic core - and F(0) - the membrane proton channel. F(1) has five subunits: alpha(3), beta(3), gamma(1), delta(1), epsilon(1). F(0) has four main subunits: a(1), b(1), b'(1) and c(10-14). The alpha and beta chains form an alternating ring which encloses part of the gamma chain. F(1) is attached to F(0) by a central stalk formed by the gamma and epsilon chains, while a peripheral stalk is formed by the delta, b and b' chains.

Its subcellular location is the plastid. It is found in the chloroplast thylakoid membrane. F(1)F(0) ATP synthase produces ATP from ADP in the presence of a proton or sodium gradient. F-type ATPases consist of two structural domains, F(1) containing the extramembraneous catalytic core and F(0) containing the membrane proton channel, linked together by a central stalk and a peripheral stalk. During catalysis, ATP synthesis in the catalytic domain of F(1) is coupled via a rotary mechanism of the central stalk subunits to proton translocation. Its function is as follows. Key component of the F(0) channel; it plays a direct role in translocation across the membrane. A homomeric c-ring of between 10-14 subunits forms the central stalk rotor element with the F(1) delta and epsilon subunits. This Chlamydomonas reinhardtii (Chlamydomonas smithii) protein is ATP synthase subunit c, chloroplastic.